The following is a 579-amino-acid chain: Glycine--tRNA ligase (579 aa).

Residue Glu175 participates in glycine binding. ATP is bound by residues 207–209 (RNE) and 218–219 (RV). Glu226 is a binding site for glycine. Position 327–328 (327–328 (EC)) interacts with ATP. Residue 442–444 (EPS) participates in glycine binding. Arg449 contacts ATP.

It belongs to the class-II aminoacyl-tRNA synthetase family. As to quaternary structure, homodimer.

The enzyme catalyses tRNA(Gly) + glycine + ATP = glycyl-tRNA(Gly) + AMP + diphosphate. The catalysed reaction is 2 ATP + H(+) = P(1),P(4)-bis(5'-adenosyl) tetraphosphate + diphosphate. Its function is as follows. Catalyzes the ATP-dependent ligation of glycine to the 3'-end of its cognate tRNA, via the formation of an aminoacyl-adenylate intermediate (Gly-AMP). Also produces diadenosine tetraphosphate (Ap4A), a universal pleiotropic signaling molecule needed for cell regulation pathways, by direct condensation of 2 ATPs. Thereby, may play a special role in Ap4A homeostasis. In Encephalitozoon cuniculi (strain GB-M1) (Microsporidian parasite), this protein is Glycine--tRNA ligase.